The sequence spans 338 residues: Lipoate-protein ligase A (338 aa).

In terms of domain architecture, BPL/LPL catalytic spans 29–216; the sequence is SPNQRVLFLW…AFFAYYDEQV (188 aa). ATP contacts are provided by residues R71, 76-79, and K134; that span reads GAVF. K134 contacts (R)-lipoate.

The protein belongs to the LplA family. Monomer.

It is found in the cytoplasm. The enzyme catalyses L-lysyl-[lipoyl-carrier protein] + (R)-lipoate + ATP = N(6)-[(R)-lipoyl]-L-lysyl-[lipoyl-carrier protein] + AMP + diphosphate + H(+). It functions in the pathway protein modification; protein lipoylation via exogenous pathway; protein N(6)-(lipoyl)lysine from lipoate: step 1/2. The protein operates within protein modification; protein lipoylation via exogenous pathway; protein N(6)-(lipoyl)lysine from lipoate: step 2/2. Catalyzes both the ATP-dependent activation of exogenously supplied lipoate to lipoyl-AMP and the transfer of the activated lipoyl onto the lipoyl domains of lipoate-dependent enzymes. The chain is Lipoate-protein ligase A from Yersinia pseudotuberculosis serotype O:1b (strain IP 31758).